Consider the following 311-residue polypeptide: Tricarboxylate transport protein, mitochondrial (311 aa).

A propeptide spans 1–13 (MAAPRGPRALSAA) (removed in mature form). Residues 1 to 21 (MAAPRGPRALSAAAPGSGKPK) form a disordered region. Solcar repeat units follow at residues 23–111 (THPG…LSNH), 122–208 (RRGL…LRNW), and 218–303 (MNPL…VVKL). 3 helical membrane passes run 29–46 (ILAG…TFPT), 86–105 (GLSS…FGMF), and 129–143 (LGAG…VCPM). Phosphoserine is present on Ser-156. Transmembrane regions (helical) follow at residues 183-202 (GLTA…FFVM), 224-241 (GVFG…NTPL), and 278-297 (GTVP…FIIY).

This sequence belongs to the mitochondrial carrier (TC 2.A.29) family. In terms of processing, possesses a short cleavable presequence, which, however, is found to be dispensable both for targeting to mitochondria and insertion into the inner membrane. However, the presequence is required to keep SLC25A1 in a soluble state and thus in an import-competent state. Mature SLC25A1 lacking the presequence is prone to aggregation. Expressed minimally but ubiquitously throughout the adult brain. Detected at higher levels in the olfactory bulb, neocortex and cerebellum. Also expressed in a subset of large cells in the globus pallidus.

The protein localises to the mitochondrion inner membrane. It is found in the mitochondrion membrane. The catalysed reaction is (S)-malate(in) + citrate(out) = (S)-malate(out) + citrate(in). The enzyme catalyses D-threo-isocitrate(in) + citrate(out) = D-threo-isocitrate(out) + citrate(in). It carries out the reaction citrate(out) + succinate(in) = citrate(in) + succinate(out). It catalyses the reaction cis-aconitate(in) + citrate(out) = cis-aconitate(out) + citrate(in). The catalysed reaction is trans-aconitate(in) + citrate(out) = trans-aconitate(out) + citrate(in). The enzyme catalyses phosphoenolpyruvate(in) + citrate(out) = phosphoenolpyruvate(out) + citrate(in). It carries out the reaction maleate(in) + citrate(out) = maleate(out) + citrate(in). Mitochondrial electroneutral antiporter that exports citrate from the mitochondria into the cytosol in exchange for malate. Also able to mediate the exchange of citrate for isocitrate, phosphoenolpyruvate, cis-aconitate and to a lesser extent trans-aconitate, maleate and succinate. In the cytoplasm, citrate plays important roles in fatty acid and sterol synthesis, regulation of glycolysis, protein acetylation, and other physiopathological processes. This is Tricarboxylate transport protein, mitochondrial from Mus musculus (Mouse).